The sequence spans 488 residues: Phenylalanine--tRNA ligase alpha subunit (488 aa).

L-phenylalanine contacts are provided by residues Thr-332, 371-373 (QLD), and Phe-410. Residue Glu-412 coordinates Mg(2+). An L-phenylalanine-binding site is contributed by Phe-435.

The protein belongs to the class-II aminoacyl-tRNA synthetase family. Phe-tRNA synthetase alpha subunit type 2 subfamily. As to quaternary structure, tetramer of two alpha and two beta subunits. Requires Mg(2+) as cofactor.

The protein resides in the cytoplasm. The enzyme catalyses tRNA(Phe) + L-phenylalanine + ATP = L-phenylalanyl-tRNA(Phe) + AMP + diphosphate + H(+). In Aeropyrum pernix (strain ATCC 700893 / DSM 11879 / JCM 9820 / NBRC 100138 / K1), this protein is Phenylalanine--tRNA ligase alpha subunit.